The chain runs to 394 residues: General receptor for phosphoinositides 1-associated scaffold protein (394 aa).

Residues 1 to 51 (MTLRRLRKLQQKEEATAAPDLAGRAPDSEAARAAPTPSGPPAAAAPPGAPG) form a disordered region. Residues 37–49 (PSGPPAAAAPPGA) show a composition bias toward pro residues. T76 carries the post-translational modification Phosphothreonine. The residue at position 93 (S93) is a Phosphoserine. One can recognise a PDZ domain in the interval 100-189 (VLTLEKGDNQ…VLRLETLYGT (90 aa)). The segment at 180-257 (VLRLETLYGT…GAGLLPGSLP (78 aa)) is interaction with PSCD3. Phosphotyrosine is present on Y236. At R269 the chain carries Omega-N-methylarginine. Residues 293-318 (EPQALPPPPPPARAPGPGSAETPASV) form a disordered region. Over residues 296–306 (ALPPPPPPARA) the composition is skewed to pro residues. Phosphoserine is present on S386.

As to quaternary structure, heteromer. Composed of TAMALIN, CYTH2 and at least one GRM1. Also interacts with CYTH3, GRM2, GRM3 and GRM5. Expressed in brain.

Its subcellular location is the cytoplasm. The protein resides in the perinuclear region. It is found in the cell membrane. It localises to the postsynaptic cell membrane. In terms of biological role, plays a role in intracellular trafficking and contributes to the macromolecular organization of group 1 metabotropic glutamate receptors (mGluRs) at synapses. This is General receptor for phosphoinositides 1-associated scaffold protein from Rattus norvegicus (Rat).